The sequence spans 576 residues: uncharacterized protein (576 aa).

A signal peptide spans Met-1–Ala-28. Residue Ser-185 is the Acyl-ester intermediate of the active site. 2 disulfides stabilise this stretch: Cys-252–Cys-269 and Cys-278–Cys-286. 4 residues coordinate Ca(2+): Asp-253, Asp-256, Asp-260, and Val-262. Residues Asp-414 and His-464 each act as charge relay system in the active site. Residues Cys-529 and Cys-551 are joined by a disulfide bond.

It belongs to the tannase family.

This is an uncharacterized protein from Xanthomonas campestris pv. campestris (strain ATCC 33913 / DSM 3586 / NCPPB 528 / LMG 568 / P 25).